The sequence spans 246 residues: Probable transcriptional regulatory protein PM0980 (246 aa).

The protein belongs to the TACO1 family.

It is found in the cytoplasm. The protein is Probable transcriptional regulatory protein PM0980 of Pasteurella multocida (strain Pm70).